The primary structure comprises 128 residues: SH2 domain-containing protein 1A (128 aa).

The SH2 domain occupies 6–102 (VYHGKISRET…GIVIPLQYPV (97 aa)). The interval 67 to 92 (DTAPGVHKRFFRKIKNLISAFQKPDQ) is interaction with FYN SH3 domain. N6-acetyllysine is present on Lys89. The segment at 103 to 128 (EKKSSARSTQGATGRREDPDVFLKTP) is disordered. Residues 116–128 (GRREDPDVFLKTP) show a composition bias toward basic and acidic residues.

Interacts with CD84, CD244, LY9, SLAMF1 and FYN. Interacts with NTRK1, NTRK2 and NTRK3.

The protein localises to the cytoplasm. Its function is as follows. Cytoplasmic adapter regulating receptors of the signaling lymphocytic activation molecule (SLAM) family such as SLAMF1, CD244, LY9, CD84, SLAMF6 and SLAMF7. In SLAM signaling seems to cooperate with SH2D1B/EAT-2. Initially it has been proposed that association with SLAMF1 prevents SLAMF1 binding to inhibitory effectors including INPP5D/SHIP1 and PTPN11/SHP-2. However, by simultaneous interactions, recruits FYN which subsequently phosphorylates and activates SLAMF1. Positively regulates CD244/2B4- and CD84-mediated natural killer (NK) cell functions. Can also promote CD48-, SLAMF6 -, LY9-, and SLAMF7-mediated NK cell activation. In the context of NK cell-mediated cytotoxicity enhances conjugate formation with target cells. May also regulate the activity of the neurotrophin receptors NTRK1, NTRK2 and NTRK3. This is SH2 domain-containing protein 1A (SH2D1A) from Sus scrofa (Pig).